The following is a 210-amino-acid chain: Large ribosomal subunit protein uL4 (210 aa).

Residues 41–79 (MANARQGTASTKTRAEVRGGGRKPWRQKGTGRARAGSNR) are disordered. Over residues 43–52 (NARQGTASTK) the composition is skewed to polar residues. The segment covering 60–71 (GGRKPWRQKGTG) has biased composition (basic residues).

The protein belongs to the universal ribosomal protein uL4 family. In terms of assembly, part of the 50S ribosomal subunit.

Its function is as follows. One of the primary rRNA binding proteins, this protein initially binds near the 5'-end of the 23S rRNA. It is important during the early stages of 50S assembly. It makes multiple contacts with different domains of the 23S rRNA in the assembled 50S subunit and ribosome. Functionally, forms part of the polypeptide exit tunnel. The protein is Large ribosomal subunit protein uL4 of Cyanothece sp. (strain PCC 7425 / ATCC 29141).